The sequence spans 446 residues: Palmitoyltransferase PFA4 (446 aa).

The Cytoplasmic segment spans residues Met1–Pro8. Residues Ile9–Phe29 form a helical membrane-spanning segment. Residues Ile30–Gln40 lie on the Lumenal side of the membrane. Residues Leu41–Asn61 form a helical membrane-spanning segment. Topologically, residues Pro62–Arg161 are cytoplasmic. In terms of domain architecture, DHHC spans Arg114–Gly164. The S-palmitoyl cysteine intermediate role is filled by Cys144. Residues Phe162–Ile182 form a helical membrane-spanning segment. Residues Asn183–Val201 are Lumenal-facing. The chain crosses the membrane as a helical span at residues Ala202 to Ile222. Over Arg223–Asp446 the chain is Cytoplasmic.

This sequence belongs to the DHHC palmitoyltransferase family. PFA4 subfamily.

It is found in the endoplasmic reticulum membrane. The enzyme catalyses L-cysteinyl-[protein] + hexadecanoyl-CoA = S-hexadecanoyl-L-cysteinyl-[protein] + CoA. Its function is as follows. Mediates the reversible addition of palmitate to target proteins, thereby regulating their membrane association and biological function. This Candida albicans (strain SC5314 / ATCC MYA-2876) (Yeast) protein is Palmitoyltransferase PFA4.